The following is a 72-amino-acid chain: Translation initiation factor IF-1 (72 aa).

The 72-residue stretch at 1–72 (MAKEDSIEMQ…SKGRIVFRAR (72 aa)) folds into the S1-like domain.

Belongs to the IF-1 family. As to quaternary structure, component of the 30S ribosomal translation pre-initiation complex which assembles on the 30S ribosome in the order IF-2 and IF-3, IF-1 and N-formylmethionyl-tRNA(fMet); mRNA recruitment can occur at any time during PIC assembly.

The protein localises to the cytoplasm. Functionally, one of the essential components for the initiation of protein synthesis. Stabilizes the binding of IF-2 and IF-3 on the 30S subunit to which N-formylmethionyl-tRNA(fMet) subsequently binds. Helps modulate mRNA selection, yielding the 30S pre-initiation complex (PIC). Upon addition of the 50S ribosomal subunit IF-1, IF-2 and IF-3 are released leaving the mature 70S translation initiation complex. In Psychromonas ingrahamii (strain DSM 17664 / CCUG 51855 / 37), this protein is Translation initiation factor IF-1.